Consider the following 558-residue polypeptide: Membrane transporter D2 (558 aa).

The tract at residues 1–28 (MTLKKRSSAPELPTSLDEDEEEDSPQPL) is disordered. At 1–38 (MTLKKRSSAPELPTSLDEDEEEDSPQPLSNTPFFSMKN) the chain is on the cytoplasmic side. The helical transmembrane segment at 39 to 59 (LIVATPIILTPLLYGYNLGFV) threads the bilayer. Residues 60 to 152 (GPYSTMYGYA…QVGYSSIQSG (93 aa)) are Extracellular-facing. A helical transmembrane segment spans residues 153-173 (VFAGSLVIGSTMGALMGGYLT). Over 174-179 (KRLDYC) the chain is Cytoplasmic. A helical transmembrane segment spans residues 180-200 (KSFLFIGLLSVIGNVLTHVAT). Residues 201 to 204 (GLFH) are Extracellular-facing. A helical transmembrane segment spans residues 205–225 (YWVLFVARIVLGFPLGWQSIT). Over 226–241 (SSHYTDKFAPANHAKT) the chain is Cytoplasmic. The helical transmembrane segment at 242 to 262 (LGTLFQVSVSTGIFVTSFFGL) threads the bilayer. The Extracellular portion of the chain corresponds to 263–281 (VLGNTIQYDAASNANTMGR). The chain crosses the membrane as a helical span at residues 282-302 (MQGLVSVSTLLSIFVVFLPLI). Residues 303–335 (TKDGYSKSRRGDYEGENSEDASRKAAEEYTMTQ) are Cytoplasmic-facing. A helical transmembrane segment spans residues 336–356 (MIGPILNGVAMGCVTQLTGIN). Residues 357–373 (ANMNFAPTIMSNLGLQP) are Extracellular-facing. The chain crosses the membrane as a helical span at residues 374–394 (LVGNIIVMAWNMLATFCVIPL). Residues 395 to 402 (SRRFSMRT) are Cytoplasmic-facing. A helical membrane pass occupies residues 403 to 423 (LFLFCGFVGSLCCVFLGGIPV). The Extracellular segment spans residues 424–441 (YPGVTKSDKAISGIAITG). A helical transmembrane segment spans residues 442 to 463 (IAIFIALYEMGVGPCFYVLAVD). Over 464–478 (VFPESFRPIGSSITV) the chain is Cytoplasmic. Residues 479 to 499 (GVMFIFNLIINICYPIATEGI) traverse the membrane as a helical segment. Residues 500–512 (SGGPSGNPNKGQA) lie on the Extracellular side of the membrane. Residues 513-533 (VAFIFFGCIGVVACVIEYFFL) traverse the membrane as a helical segment. The Cytoplasmic portion of the chain corresponds to 534–558 (QPWVEPEAKMTDDLDGAAVPEGKHD).

This sequence belongs to the major facilitator superfamily. Sugar transporter (TC 2.A.1.1) family.

It is found in the membrane. In Leishmania donovani, this protein is Membrane transporter D2.